The sequence spans 71 residues: Ubiquinol-cytochrome c reductase complex assembly factor 6 (71 aa).

Residues 1–8 are Mitochondrial matrix-facing; the sequence is MPAGVPMS. A helical; Signal-anchor for type II membrane protein transmembrane segment spans residues 9 to 25; it reads TYLKMFAASLLAMCAGA. At 26–71 the chain is on the mitochondrial intermembrane side; the sequence is EVVHRYYRPDLTIPEIPPKRGELKTELLGLKERKHKPQVSQQEELK.

The protein belongs to the UQCC6 family. In terms of assembly, interacts with UQCRC1. Interacts with UQCRQ. Interacts with UQCC5. Forms a complex, named COMB/coordinator of mitochondrial CYTB biogenesis, composed of UQCC1, UQCC2, UQCC4, UQCC5 and UQCC6; stabilizes nascent cytochrome b/MT-CYB and promotes its membrane insertion. Forms a complex, named COMA, composed of UQCC1, UQCC2 and UQCC4; activates MT-CYB translation. Forms a complex, named COMC, composed of UQCC1, UQCC2; UQCC3 and UQCC4; mediates MT-CYB hemylation and association with the first nuclear-encoded complex III subunit UQCRQ. Interacts with MT-CYB. As to expression, cardiac and skeletal muscle (at protein level).

The protein localises to the mitochondrion inner membrane. Functionally, required for the assembly and stability of the mitochondrial ubiquinol-cytochrome c reductase complex (complex III (CIII) or cytochrome b-c1 complex), a multisubunit transmembrane complex that is part of the mitochondrial electron transport chain (ETC) which drives oxidative phosphorylation. Mediates early complex III biogenesis. Participates in regulating the levels of electron transport chain proteins, and therefore energy supply, in response to changes in energy demand. Also required for cytochrome c oxidase complex (complex IV) assembly. The chain is Ubiquinol-cytochrome c reductase complex assembly factor 6 from Homo sapiens (Human).